Here is a 5596-residue protein sequence, read N- to C-terminus: Midasin (5596 aa).

The residue at position 1 (methionine 1) is an N-acetylmethionine. AAA-ATPase protomer stretches follow at residues 307–591, 659–978, 1048–1316, and 1362–1616; these read SVCK…TSKL, LIEQ…ASNP, KEPT…QEEI, and HIVW…NKMG. 329 to 336 contacts ATP; sequence GPIGCGKT. Residues 517 to 537 form a disordered region; the sequence is SSVGCEQAPEEVSEARRENKR. Residues 677–684 and 1084–1091 each bind ATP; these read GETGTGKT and GETSVGKT. The residue at position 1177 (threonine 1177) is a Phosphothreonine. ATP is bound at residue 1390-1397; it reads GDTGCGKT. Residue lysine 1683 is modified to N6-acetyllysine. AAA-ATPase protomer stretches follow at residues 1738–1995 and 2053–2313; these read RLLR…AVFK and MKCV…IYIS. Residues 1753–1760 and 2066–2073 each bind ATP; these read GSPGVGKT and GPASVGKT. Position 1754 is a phosphoserine (serine 1754). The interval 2418–4691 is linker; sequence SLRAHETWGD…EGEGMKDVSD (2274 aa). Residues 3989–4008 form a disordered region; that stretch reads LVESDKEEQPDFLPRPTDGA. Threonine 4212 is modified (phosphothreonine). Position 4538 is a phosphoserine (serine 4538). Disordered stretches follow at residues 4669–4688 and 4700–5260; these read ATEF…GMKD and EDTF…SRES. Over residues 4702 to 4724 the composition is skewed to basic and acidic residues; sequence TFQKGQEKDKEDPDSKSDIKGED. A compositionally biased stretch (acidic residues) spans 4741–4757; it reads ELEEQEEDDEKSDSEGG. Phosphoserine occurs at positions 4752 and 4754. A compositionally biased stretch (basic and acidic residues) spans 4758-4780; it reads DLDKHMGDLNGEEADKLDERLWG. Residues 4781-4794 show a composition bias toward acidic residues; the sequence is DDDEEEDEEEEDNK. A compositionally biased stretch (basic and acidic residues) spans 4822 to 4834; sequence NKDKSQQDKKEEK. The segment covering 4835-4844 has biased composition (acidic residues); sequence EEAEADDGGQ. Basic and acidic residues predominate over residues 4845–4855; it reads GEDKINEQIDE. The span at 4877–4888 shows a compositional bias: acidic residues; that stretch reads EALDLPDDLNLD. Serine 4889 carries the post-translational modification Phosphoserine. A compositionally biased stretch (acidic residues) spans 4896–4908; that stretch reads EDTDNEEGEEENP. A Phosphothreonine modification is found at threonine 4898. The segment covering 4909 to 4928 has biased composition (basic and acidic residues); sequence LEIKEKPEEAGHEAEERGET. Serine 4937 and serine 4946 each carry phosphoserine. Residues 4940-4966 show a composition bias toward acidic residues; sequence EPEEGPSEDDKAEGEEEMDTGADDQDG. A compositionally biased stretch (basic and acidic residues) spans 4968–4989; the sequence is AAQHPEEHSEEQQQSVEEKDKE. Residues 5007 to 5021 are compositionally biased toward acidic residues; the sequence is QEEEEREDSDTEEQV. Phosphoserine is present on serine 5015. A compositionally biased stretch (polar residues) spans 5033-5046; it reads CGQTGVENMQNTQA. Basic and acidic residues predominate over residues 5054–5064; sequence PEKEQGKEEHG. Basic residues predominate over residues 5088-5101; it reads KHTRKNTQSFKRKP. Basic and acidic residues predominate over residues 5105–5115; it reads DNERSMGDHNE. The span at 5132-5141 shows a compositional bias: low complexity; that stretch reads QGPAQQPQAQ. Positions 5181–5197 are enriched in acidic residues; sequence QEEEEIEDTLMDTEEQE. 2 stretches are compositionally biased toward basic and acidic residues: residues 5198–5213 and 5233–5260; these read EFKA…EEIK and KTEE…SRES. A VWFA domain is found at 5384–5583; the sequence is QICLAIDDSS…ALPETLSDAL (200 aa).

It belongs to the midasin family. Associates with pre-60S ribosomes in the nucleoplasm. Interacts (via its hexameric AAA ATPase ring) with the PELP1 complex (via PELP1); the interaction is regulated by SUMO conjugation of PELP1 and is crucial for recruitment of MDN1 to the pre-ribosomal particle. Interacts (via VWFA/MIDAS domain) with WDR12 (via UBL domain). Interacts (via VWFA/MIDAS domain) with NLE1 (via UBL domain).

The protein localises to the nucleus. Its subcellular location is the nucleolus. It localises to the nucleoplasm. The protein resides in the cytoplasm. Functionally, nuclear chaperone required for maturation and nuclear export of pre-60S ribosome subunits. Functions at successive maturation steps to remove ribosomal factors at critical transition points, first driving the exit of early pre-60S particles from the nucleolus and then driving late pre-60S particles from the nucleus. At an early stage in 60S maturation, mediates the dissociation of the PeBoW complex (PES1-BOP1-WDR12) from early pre-60S particles, rendering them competent for export from the nucleolus to the nucleoplasm. Subsequently recruited to the nucleoplasmic particles through interaction with SUMO-conjugated PELP1 complex. This binding is only possible if the 5S RNP at the central protuberance has undergone the rotation to complete its maturation. This Homo sapiens (Human) protein is Midasin (MDN1).